A 136-amino-acid chain; its full sequence is Nodulation protein K (136 aa).

The chain is Nodulation protein K (nodK) from Bradyrhizobium sp. (strain ANU 289).